A 250-amino-acid chain; its full sequence is MAMSKIVSLTGLLASASLVAGHGYVSGVVIDGQYYGGYLVDKYAYSDNAPDTIGWTTSATDLGFVDGTGYQSPDIICHKDGAPGALTAEVAAGGKIELQWTEWPESHHGPVLNYLAPCGGECSAVDKTTLEFFKIEAKGLIDGTTPPGQWATDDLISNNNSYTVTIPTSIQEGNYVLRHEIIGLHSAGQKDGAQNYPQCINIKVTGGGDATPAGTAGEALYKDTDAGILFDIYSDLSGGYPIPGPEVFSA.

An N-terminal signal peptide occupies residues 1-21 (MAMSKIVSLTGLLASASLVAG). Residues H22 and H107 each contribute to the Cu(2+) site. 2 disulfide bridges follow: C77–C199 and C118–C122. N159 carries N-linked (GlcNAc...) asparagine glycosylation. O2-binding residues include H185 and Q194. Y196 provides a ligand contact to Cu(2+).

Belongs to the polysaccharide monooxygenase AA9 family. Cu(2+) is required as a cofactor.

Its subcellular location is the secreted. In terms of biological role, lytic polysaccharide monooxygenase (LPMO) that exhibits oxidative cleavage beta-O-4 linkage of lignin resulting in the formation of aromatic compound guaiacol. Catalysis by LPMOs requires the reduction of the active-site copper from Cu(II) to Cu(I) by a reducing agent and H(2)O(2) or O(2) as a cosubstrate. Does not use cellulose, cello-oligosaccharides, xyloglucan, xylan, chitin nor starch as substrates. Able to depolymerize the lignin dimer guaicyl glycerol beta-guaicyl ether (GGE). The polypeptide is AA9 family lytic polysaccharide monooxygenase AA17 (Aspergillus oryzae (strain ATCC 42149 / RIB 40) (Yellow koji mold)).